The chain runs to 94 residues: Small ubiquitin-related modifier 3 (94 aa).

Lys-11 is covalently cross-linked (Glycyl lysine isopeptide (Lys-Gly) (interchain with G-Cter in SUMO)). Residues 15 to 92 (DHINLKVAGQ…IDVFQQQTGG (78 aa)) enclose the Ubiquitin-like domain. Residue Gly-92 forms a Glycyl lysine isopeptide (Gly-Lys) (interchain with K-? in acceptor proteins) linkage. Positions 93–94 (LC) are excised as a propeptide.

This sequence belongs to the ubiquitin family. SUMO subfamily. Interacts with SAE2 and UBE2I. Covalently attached to a number of proteins. In terms of processing, polymeric chains can be formed through Lys-11 cross-linking. Cleavage of precursor form by a sentrin-specific protease is necessary for function.

The protein localises to the cytoplasm. Its subcellular location is the nucleus. It is found in the PML body. Ubiquitin-like protein which can be covalently attached to target lysines either as a monomer or as a lysine-linked polymer. Does not seem to be involved in protein degradation and may function as an antagonist of ubiquitin in the degradation process. Plays a role in a number of cellular processes such as nuclear transport, DNA replication and repair, mitosis and signal transduction. Covalent attachment to its substrates requires prior activation by the E1 complex SAE1-SAE2 and linkage to the E2 enzyme UBE2I. The chain is Small ubiquitin-related modifier 3 from Gallus gallus (Chicken).